Consider the following 315-residue polypeptide: 31 kDa ribonucleoprotein, chloroplastic (315 aa).

Residues methionine 1–serine 71 constitute a chloroplast transit peptide. Residues alanine 114–proline 133 are disordered. The segment covering glycine 115 to proline 133 has biased composition (acidic residues). 2 RRM domains span residues alanine 136–arginine 214 and tyrosine 230–aspartate 308.

It localises to the plastid. The protein resides in the chloroplast. Could be involved in splicing and/or processing of chloroplast RNA's. The protein is 31 kDa ribonucleoprotein, chloroplastic of Nicotiana sylvestris (Wood tobacco).